Reading from the N-terminus, the 1356-residue chain is DNA-directed RNA polymerase subunit beta (1356 aa).

It belongs to the RNA polymerase beta chain family. In terms of assembly, the RNAP catalytic core consists of 2 alpha, 1 beta, 1 beta' and 1 omega subunit. When a sigma factor is associated with the core the holoenzyme is formed, which can initiate transcription.

The enzyme catalyses RNA(n) + a ribonucleoside 5'-triphosphate = RNA(n+1) + diphosphate. Functionally, DNA-dependent RNA polymerase catalyzes the transcription of DNA into RNA using the four ribonucleoside triphosphates as substrates. The sequence is that of DNA-directed RNA polymerase subunit beta from Stutzerimonas stutzeri (strain A1501) (Pseudomonas stutzeri).